The primary structure comprises 317 residues: Olfactory receptor 2G2 (317 aa).

At 1–28 (MGMVRHTNESNLAGFILLGFSDYPQLQK) the chain is on the extracellular side. The N-linked (GlcNAc...) asparagine glycan is linked to N8. The helical transmembrane segment at 29 to 52 (VLFVLILILYLLTILGNTTIILVS) threads the bilayer. At 53-60 (RLEPKLHM) the chain is on the cytoplasmic side. A helical membrane pass occupies residues 61–82 (PMYFFLSHLSFLYRCFTSSVIP). The Extracellular portion of the chain corresponds to 83-103 (QLLVNLWEPMKTIAYGGCLVH). A disulfide bridge connects residues C100 and C192. Residues 104 to 123 (LYNSHALGSTECVLPAVMSC) traverse the membrane as a helical segment. Residues 124–142 (DRYVAVCRPLHYTVLMHIH) lie on the Cytoplasmic side of the membrane. A helical membrane pass occupies residues 143–161 (LCMALASMAWLSGIATTLV). Topologically, residues 162-198 (QSTLTLQLPFCGHRQVDHFICEVPVLIKLACVGTTFN) are extracellular. Residues 199-222 (EAELFVASILFLIVPVSFILVSSG) traverse the membrane as a helical segment. Topologically, residues 223-239 (YIAHAVLRIKSATRRQK) are cytoplasmic. The chain crosses the membrane as a helical span at residues 240–262 (AFGTCFSHLTVVTIFYGTIIFMY). Topologically, residues 263-275 (LQPAKSRSRDQGK) are extracellular. Residues 276 to 295 (FVSLFYTVVTRMLNPLIYTL) traverse the membrane as a helical segment. The Cytoplasmic portion of the chain corresponds to 296 to 317 (RIKEVKGALKKVLAKALGVNIL).

It belongs to the G-protein coupled receptor 1 family.

The protein localises to the cell membrane. Odorant receptor. This chain is Olfactory receptor 2G2 (OR2G2), found in Homo sapiens (Human).